Here is a 124-residue protein sequence, read N- to C-terminus: Fluoride-specific ion channel FluC (124 aa).

Transmembrane regions (helical) follow at residues 5–25 (VYIA…SGLV), 32–52 (SFPY…GLVM), 67–87 (FAIT…SFET), and 96–116 (LLIA…CTWI). Na(+)-binding residues include Gly75 and Thr78.

It belongs to the fluoride channel Fluc/FEX (TC 1.A.43) family.

Its subcellular location is the cell inner membrane. The catalysed reaction is fluoride(in) = fluoride(out). Its activity is regulated as follows. Na(+) is not transported, but it plays an essential structural role and its presence is essential for fluoride channel function. Functionally, fluoride-specific ion channel. Important for reducing fluoride concentration in the cell, thus reducing its toxicity. The protein is Fluoride-specific ion channel FluC of Geobacter sp. (strain M21).